The following is a 402-amino-acid chain: Multidrug resistance protein MdtH (402 aa).

Helical transmembrane passes span 13–33 (YFLLIDNMLVVLGFFVVFPLI), 34–54 (SIRFVDSLGWAALMVGIALGL), 99–116 (PWVLWLSCVLSGLGGTLF), 139–159 (LLMMQDSAGAVTGALIGSWLL), 165–185 (LVCGVGALLFVLCAGFNAWLL), 214–234 (VLTLTGYYMLAVQVMLMLPVM), 243–263 (AAVKWMYAIEAVLSLTLLYPL), 277–297 (LMAGLLVMTFSLVPIGLASNL), 300–320 (LFTLICLFYIGSIIAEPARET), 340–360 (LGLAFGGALGYAGGGWLFDAG), and 368–388 (LPWAMLGVIGVGTFLMLWWQF).

The protein belongs to the major facilitator superfamily. DHA1 family. MdtH (TC 2.A.1.2.21) subfamily.

It is found in the cell inner membrane. This is Multidrug resistance protein MdtH from Cronobacter sakazakii (strain ATCC BAA-894) (Enterobacter sakazakii).